Consider the following 962-residue polypeptide: Glycine dehydrogenase (decarboxylating) (962 aa).

Residue Lys709 is modified to N6-(pyridoxal phosphate)lysine.

The protein belongs to the GcvP family. As to quaternary structure, the glycine cleavage system is composed of four proteins: P, T, L and H. Pyridoxal 5'-phosphate is required as a cofactor.

It catalyses the reaction N(6)-[(R)-lipoyl]-L-lysyl-[glycine-cleavage complex H protein] + glycine + H(+) = N(6)-[(R)-S(8)-aminomethyldihydrolipoyl]-L-lysyl-[glycine-cleavage complex H protein] + CO2. Its function is as follows. The glycine cleavage system catalyzes the degradation of glycine. The P protein binds the alpha-amino group of glycine through its pyridoxal phosphate cofactor; CO(2) is released and the remaining methylamine moiety is then transferred to the lipoamide cofactor of the H protein. This chain is Glycine dehydrogenase (decarboxylating), found in Shewanella frigidimarina (strain NCIMB 400).